Here is a 414-residue protein sequence, read N- to C-terminus: Esterase FrsA (414 aa).

Belongs to the FrsA family.

It carries out the reaction a carboxylic ester + H2O = an alcohol + a carboxylate + H(+). Its function is as follows. Catalyzes the hydrolysis of esters. The protein is Esterase FrsA of Escherichia coli O8 (strain IAI1).